The following is a 157-amino-acid chain: Endoribonuclease YbeY (157 aa).

Zn(2+)-binding residues include H121, H125, and D131.

The protein belongs to the endoribonuclease YbeY family. It depends on Zn(2+) as a cofactor.

Its subcellular location is the cytoplasm. Its function is as follows. Single strand-specific metallo-endoribonuclease involved in late-stage 70S ribosome quality control and in maturation of the 3' terminus of the 16S rRNA. The protein is Endoribonuclease YbeY of Salinibacter ruber (strain DSM 13855 / M31).